The following is a 478-amino-acid chain: Histidine--tRNA ligase (478 aa).

This sequence belongs to the class-II aminoacyl-tRNA synthetase family. Homodimer.

It is found in the cytoplasm. It carries out the reaction tRNA(His) + L-histidine + ATP = L-histidyl-tRNA(His) + AMP + diphosphate + H(+). This Xanthomonas axonopodis pv. citri (strain 306) protein is Histidine--tRNA ligase (hisS).